Consider the following 410-residue polypeptide: MARLSYVRIKYLFFSWLAVFIGSWVIYVRYNSYTELCRGQECKTAICDKYRKGIIDGSACEGLCEKETIYFGKCLSAKPNNQIYLGIWGNLEGVIKCQMENTLHLDFGVDLEPRKEIVLFDKPTRGTTVQKFKEMVHSLVKKRLGDQGNLQDLVNLILKAADSNKDGHVSLPEAKSAWALLQLNEFLLMVILQDKEHTPKLLGYCGDLYITERVPYTSLYGISLPWIIEVFIPMGLRKRMDQWFTPSWPRKAKIVIGLLEFVEDIFHGLYGNFLMCDVSAKNFGYNDKYDLKMVDMRKIIPEMSLKEYIKYKSCESDSDCVYGADCGTTCDQSKRCTTDVTQPNLAKVCLLVKDYLLSGTPSEIRDELEKQIYSCIALKAATKHMEMEHALILNNLKALLWKKISHTNDS.

Topologically, residues M1–S5 are cytoplasmic. A helical transmembrane segment spans residues Y6 to I26. The Lumenal segment spans residues Y27 to S410.

This sequence belongs to the DIPK family. In terms of processing, among the many cysteines in the lumenal domain, most are probably involved in disulfide bonds.

The protein resides in the endoplasmic reticulum membrane. This Xenopus laevis (African clawed frog) protein is Divergent protein kinase domain 1A (dipk1a).